We begin with the raw amino-acid sequence, 343 residues long: 5-amino-6-(D-ribitylamino)uracil--L-tyrosine 4-hydroxyphenyl transferase (343 aa).

The Radical SAM core domain maps to 39–268 (VTYVVNRNIN…AIARILLYPE (230 aa)). [4Fe-4S] cluster contacts are provided by cysteine 53, cysteine 57, and cysteine 60.

It belongs to the radical SAM superfamily. CofH family. As to quaternary structure, consists of two subunits, CofG and CofH. [4Fe-4S] cluster is required as a cofactor.

It carries out the reaction 5-amino-6-(D-ribitylamino)uracil + L-tyrosine + S-adenosyl-L-methionine = 5-amino-5-(4-hydroxybenzyl)-6-(D-ribitylimino)-5,6-dihydrouracil + 2-iminoacetate + 5'-deoxyadenosine + L-methionine + H(+). It participates in cofactor biosynthesis; coenzyme F0 biosynthesis. In terms of biological role, catalyzes the radical-mediated synthesis of 5-amino-5-(4-hydroxybenzyl)-6-(D-ribitylimino)-5,6-dihydrouracil from 5-amino-6-(D-ribitylamino)uracil and L-tyrosine. The chain is 5-amino-6-(D-ribitylamino)uracil--L-tyrosine 4-hydroxyphenyl transferase from Archaeoglobus fulgidus (strain ATCC 49558 / DSM 4304 / JCM 9628 / NBRC 100126 / VC-16).